Consider the following 103-residue polypeptide: Large ribosomal subunit protein bL21 (103 aa).

This sequence belongs to the bacterial ribosomal protein bL21 family. In terms of assembly, part of the 50S ribosomal subunit. Contacts protein L20.

Functionally, this protein binds to 23S rRNA in the presence of protein L20. In Cupriavidus necator (strain ATCC 17699 / DSM 428 / KCTC 22496 / NCIMB 10442 / H16 / Stanier 337) (Ralstonia eutropha), this protein is Large ribosomal subunit protein bL21.